The following is a 520-amino-acid chain: Cytochrome P450 4F3 (520 aa).

Residues 11–31 (LWPMAASPWLLLLLVGASWLL) traverse the membrane as a helical segment. Positions 328 and 468 each coordinate heme.

It belongs to the cytochrome P450 family. The cofactor is heme. As to expression, selectively expressed in blood neutrophils and bone marrow cells. Coexpressed with CYP4F3B in prostate, ileum and trachea. Selectively expressed in liver and kidney. It is also the predominant CYP4F isoform in trachea and tissues of the gastrointestinal tract.

Its subcellular location is the endoplasmic reticulum membrane. The protein resides in the microsome membrane. The enzyme catalyses an organic molecule + reduced [NADPH--hemoprotein reductase] + O2 = an alcohol + oxidized [NADPH--hemoprotein reductase] + H2O + H(+). The catalysed reaction is leukotriene B4 + reduced [NADPH--hemoprotein reductase] + O2 = 20-hydroxy-leukotriene B4 + oxidized [NADPH--hemoprotein reductase] + H2O + H(+). It carries out the reaction 20-hydroxy-leukotriene B4 + reduced [NADPH--hemoprotein reductase] + O2 = 20-oxo-leukotriene B4 + oxidized [NADPH--hemoprotein reductase] + 2 H2O + H(+). It catalyses the reaction 20-oxo-leukotriene B4 + reduced [NADPH--hemoprotein reductase] + O2 = 20-carboxy-leukotriene B4 + oxidized [NADPH--hemoprotein reductase] + H2O + 2 H(+). The enzyme catalyses (5Z,8Z,11Z)-eicosatrienoate + reduced [NADPH--hemoprotein reductase] + O2 = 20-hydroxy-(5Z,8Z,11Z)-eicosatrienoate + oxidized [NADPH--hemoprotein reductase] + H2O + H(+). The catalysed reaction is (5Z,8Z,11Z,14Z)-eicosatetraenoate + reduced [NADPH--hemoprotein reductase] + O2 = 20-hydroxy-(5Z,8Z,11Z,14Z)-eicosatetraenoate + oxidized [NADPH--hemoprotein reductase] + H2O + H(+). It carries out the reaction (5Z,8Z,11Z,14Z,17Z)-eicosapentaenoate + reduced [NADPH--hemoprotein reductase] + O2 = 19-hydroxy-(5Z,8Z,11Z,14Z,17Z)-eicosapentaenoate + oxidized [NADPH--hemoprotein reductase] + H2O + H(+). It catalyses the reaction (5Z,8Z,11Z,14Z,17Z)-eicosapentaenoate + reduced [NADPH--hemoprotein reductase] + O2 = 20-hydroxy-(5Z,8Z,11Z,14Z,17Z)-eicosapentaenoate + oxidized [NADPH--hemoprotein reductase] + H2O + H(+). The enzyme catalyses (4Z,7Z,10Z,13Z,16Z,19Z)-docosahexaenoate + reduced [NADPH--hemoprotein reductase] + O2 = 21-hydroxy-(4Z,7Z,10Z,13Z,16Z,19Z)-docosahexaenoate + oxidized [NADPH--hemoprotein reductase] + H2O + H(+). The catalysed reaction is (4Z,7Z,10Z,13Z,16Z,19Z)-docosahexaenoate + reduced [NADPH--hemoprotein reductase] + O2 = 22-hydroxy-(4Z,7Z,10Z,13Z,16Z,19Z)-docosahexaenoate + oxidized [NADPH--hemoprotein reductase] + H2O + H(+). It carries out the reaction 8,9-epoxy-(5Z,11Z,14Z)-eicosatrienoate + reduced [NADPH--hemoprotein reductase] + O2 = 20-hydroxy-8,9-epoxy-(5Z,11Z,14Z)-eicosatrienoate + oxidized [NADPH--hemoprotein reductase] + H2O + H(+). It catalyses the reaction 11,12-epoxy-(5Z,8Z,14Z)-eicosatrienoate + reduced [NADPH--hemoprotein reductase] + O2 = 20-hydroxy-11,12-epoxy-(5Z,8Z,14Z)-eicosatrienoate + oxidized [NADPH--hemoprotein reductase] + H2O + H(+). The enzyme catalyses 14,15-epoxy-(5Z,8Z,11Z)-eicosatrienoate + reduced [NADPH--hemoprotein reductase] + O2 = 20-hydroxy-14,15-epoxy-(5Z,8Z,11Z)-eicosatrienoate + oxidized [NADPH--hemoprotein reductase] + H2O + H(+). The catalysed reaction is 12,13-epoxy-(9Z)-octadecenoate + reduced [NADPH--hemoprotein reductase] + O2 = 18-hydroxy-12,13-epoxy-(9Z)-octadecenoate + oxidized [NADPH--hemoprotein reductase] + H2O + H(+). It carries out the reaction 9,10-epoxy-(12Z)-octadecenoate + reduced [NADPH--hemoprotein reductase] + O2 = 18-hydroxy-9,10-epoxy-(12Z)-octadecenoate + oxidized [NADPH--hemoprotein reductase] + H2O + H(+). It catalyses the reaction 9,10-epoxyoctadecanoate + reduced [NADPH--hemoprotein reductase] + O2 = 18-hydroxy-9,10-epoxy-octadecanoate + oxidized [NADPH--hemoprotein reductase] + H2O + H(+). The enzyme catalyses (12R)-hydroxy-(9Z)-octadecenoate + reduced [NADPH--hemoprotein reductase] + O2 = (12R),18-dihydroxy-(9Z)-octadecenoate + oxidized [NADPH--hemoprotein reductase] + H2O + H(+). The catalysed reaction is 12-hydroxyoctadecanoate + reduced [NADPH--hemoprotein reductase] + O2 = 12,18-dihydroxyoctadecanoate + oxidized [NADPH--hemoprotein reductase] + H2O + H(+). It carries out the reaction 5-hydroxy-(6E,8Z,11Z,14Z)-eicosatetraenoate + reduced [NADPH--hemoprotein reductase] + O2 = 5,20-dihydroxy-(6E,8Z,11Z,14Z)-eicosatetraenoate + oxidized [NADPH--hemoprotein reductase] + H2O + H(+). It catalyses the reaction 8-hydroxy-(5Z,9E,11Z,14Z)-eicosatetraenoate + reduced [NADPH--hemoprotein reductase] + O2 = 8,20-dihydroxy-(5Z,9E,11Z,14Z)-eicosatetraenoate + oxidized [NADPH--hemoprotein reductase] + H2O + H(+). The enzyme catalyses 12-hydroxy-(5Z,8Z,10E,14Z)-eicosatetraenoate + reduced [NADPH--hemoprotein reductase] + O2 = 12,20-dihydroxy-(5Z,8Z,10E,14Z)-eicosatetraenoate + oxidized [NADPH--hemoprotein reductase] + H2O + H(+). The catalysed reaction is 5-hydroxy-(6E,8Z,11Z,14Z,17Z)-eicosapentaenoate + reduced [NADPH--hemoprotein reductase] + O2 = 5,20-dihydroxy-(6E,8Z,11Z,14Z,17Z)-eicosapentaenoate + oxidized [NADPH--hemoprotein reductase] + H2O + H(+). It carries out the reaction lipoxin A4 + reduced [NADPH--hemoprotein reductase] + O2 = 20-hydroxy-lipoxin A4 + oxidized [NADPH--hemoprotein reductase] + H2O + H(+). It catalyses the reaction lipoxin B4 + reduced [NADPH--hemoprotein reductase] + O2 = 20-hydroxy-lipoxin B4 + oxidized [NADPH--hemoprotein reductase] + H2O + H(+). The enzyme catalyses 22-hydroxydocosanoate + reduced [NADPH--hemoprotein reductase] + O2 = 22-oxodocosanoate + oxidized [NADPH--hemoprotein reductase] + 2 H2O + H(+). The catalysed reaction is 22-oxodocosanoate + reduced [NADPH--hemoprotein reductase] + O2 = docosanedioate + oxidized [NADPH--hemoprotein reductase] + H2O + 2 H(+). It carries out the reaction docosanoate + reduced [NADPH--hemoprotein reductase] + O2 = 22-hydroxydocosanoate + oxidized [NADPH--hemoprotein reductase] + H2O + H(+). It catalyses the reaction tetracosanoate + reduced [NADPH--hemoprotein reductase] + O2 = 24-hydroxytetracosanoate + oxidized [NADPH--hemoprotein reductase] + H2O + H(+). The enzyme catalyses hexacosanoate + reduced [NADPH--hemoprotein reductase] + O2 = 26-hydroxyhexacosanoate + oxidized [NADPH--hemoprotein reductase] + H2O + H(+). The catalysed reaction is 26-hydroxyhexacosanoate + reduced [NADPH--hemoprotein reductase] + O2 = 26-oxohexacosanoate + oxidized [NADPH--hemoprotein reductase] + 2 H2O + H(+). It carries out the reaction 26-oxohexacosanoate + reduced [NADPH--hemoprotein reductase] + O2 = hexacosanedioate + oxidized [NADPH--hemoprotein reductase] + H2O + 2 H(+). It catalyses the reaction 3-hydroxyoctadecanoate + reduced [NADPH--hemoprotein reductase] + O2 = 3,18-dihydroxyoctadecanoate + oxidized [NADPH--hemoprotein reductase] + H2O + H(+). The enzyme catalyses 3-hydroxyhexadecanoate + reduced [NADPH--hemoprotein reductase] + O2 = 3,16-dihydroxyhexadecanoate + oxidized [NADPH--hemoprotein reductase] + H2O + H(+). It participates in lipid metabolism; leukotriene B4 degradation. Its pathway is lipid metabolism; arachidonate metabolism. Inhibited by carbon monoxide (CO). In terms of biological role, a cytochrome P450 monooxygenase involved in the metabolism of various endogenous substrates, including fatty acids and their oxygenated derivatives (oxylipins). Mechanistically, uses molecular oxygen inserting one oxygen atom into a substrate, and reducing the second into a water molecule, with two electrons provided by NADPH via cytochrome P450 reductase (CPR; NADPH-ferrihemoprotein reductase). May play a role in inactivation of pro-inflammatory and anti-inflammatory oxylipins during the resolution of inflammation. Its function is as follows. Catalyzes predominantly the oxidation of the terminal carbon (omega-oxidation) of oxylipins in myeloid cells, displaying higher affinity for arachidonate metabolite leukotriene B4 (LTB4). Inactivates LTB4 via three successive oxidative transformations to 20-hydroxy-LTB4, then to 20-oxo-LTB4 and to 20-carboxy-LTB4. Has omega-hydroxylase activity toward long-chain fatty acid epoxides with preference for 8,9-epoxy-(5Z,11Z,14Z)-eicosatrienoate (EET) and 9,10-epoxyoctadecanoate. Omega-hydroxylates monohydroxy polyunsaturated fatty acids (PUFAs), including hydroxyeicosatetraenoates (HETEs) and hydroxyeicosapentaenoates (HEPEs), to dihydroxy compounds. Contributes to the degradation of saturated very long-chain fatty acids (VLCFAs) such as docosanoic acid, by catalyzing successive omega-oxidations to the corresponding dicarboxylic acid, thereby initiating chain shortening. Has low hydroxylase activity toward PUFAs. Catalyzes predominantly the oxidation of the terminal carbon (omega-oxidation) of polyunsaturated fatty acids (PUFAs). Participates in the conversion of arachidonic acid to 20-hydroxyeicosatetraenoic acid (20-HETE), a signaling molecule acting both as vasoconstrictive and natriuretic with overall effect on arterial blood pressure. Has high omega-hydroxylase activity toward other PUFAs, including eicosatrienoic acid (ETA), eicosapentaenoic acid (EPA) and docosahexaenoic acid (DHA). Can also catalyze the oxidation of the penultimate carbon (omega-1 oxidation) of PUFAs with lower efficiency. Contributes to the degradation of saturated very long-chain fatty acids (VLCFAs) such as docosanoic acid and hexacosanoic acid, by catalyzing successive omega-oxidations to the corresponding dicarboxylic acids, thereby initiating chain shortening. Omega-hydroxylates long-chain 3-hydroxy fatty acids, likely initiating the oxidative conversion to the corresponding 3-hydroxydicarboxylic fatty acids. Has omega-hydroxylase activity toward long-chain fatty acid epoxides with preference for 8,9-epoxy-(5Z,11Z,14Z)-eicosatrienoate (EET) and 9,10-epoxyoctadecanoate. The chain is Cytochrome P450 4F3 from Homo sapiens (Human).